We begin with the raw amino-acid sequence, 120 residues long: Prefoldin subunit beta (120 aa).

The protein belongs to the prefoldin subunit beta family. Heterohexamer of two alpha and four beta subunits.

It is found in the cytoplasm. Functionally, molecular chaperone capable of stabilizing a range of proteins. Seems to fulfill an ATP-independent, HSP70-like function in archaeal de novo protein folding. In Methanopyrus kandleri (strain AV19 / DSM 6324 / JCM 9639 / NBRC 100938), this protein is Prefoldin subunit beta (pfdB).